The chain runs to 895 residues: Alanine--tRNA ligase (895 aa).

Zn(2+) contacts are provided by His586, His590, Cys690, and His694.

The protein belongs to the class-II aminoacyl-tRNA synthetase family. Requires Zn(2+) as cofactor.

The protein localises to the cytoplasm. The enzyme catalyses tRNA(Ala) + L-alanine + ATP = L-alanyl-tRNA(Ala) + AMP + diphosphate. Functionally, catalyzes the attachment of alanine to tRNA(Ala) in a two-step reaction: alanine is first activated by ATP to form Ala-AMP and then transferred to the acceptor end of tRNA(Ala). Also edits incorrectly charged Ser-tRNA(Ala) and Gly-tRNA(Ala) via its editing domain. The polypeptide is Alanine--tRNA ligase (Korarchaeum cryptofilum (strain OPF8)).